A 527-amino-acid polypeptide reads, in one-letter code: Secologanin synthase 2 (527 aa).

Residues 1-11 (MEMDMDIIRKA) are Lumenal-facing. Residues 12 to 32 (IAATIFALVMAWAWRVLDWAW) traverse the membrane as a helical segment. Over 33–527 (FTPKRIEKRL…IYKKLERQNF (495 aa)) the chain is Cytoplasmic. Cys-470 provides a ligand contact to heme.

The protein belongs to the cytochrome P450 family. Heme serves as cofactor. In terms of tissue distribution, expressed in leaves (especially in leaf epidermis), and, to a lower extent, in roots, stems, flower buds and flowers.

It is found in the endoplasmic reticulum membrane. The catalysed reaction is loganin + reduced [NADPH--hemoprotein reductase] + O2 = secologanin + oxidized [NADPH--hemoprotein reductase] + 2 H2O + H(+). The enzyme catalyses secologanin + reduced [NADPH--hemoprotein reductase] + O2 = secoxyloganin + oxidized [NADPH--hemoprotein reductase] + H2O + 2 H(+). It participates in alkaloid biosynthesis. In terms of biological role, component of the seco-iridoid and derivatives monoterpenoid indole alkaloids (MIAs, e.g. secologanin) biosynthesis pathway. Catalyzes the conversion of loganin into secologanin. Catalyzes the conversion of secologanin into secoxyloganin. The chain is Secologanin synthase 2 from Catharanthus roseus (Madagascar periwinkle).